Reading from the N-terminus, the 358-residue chain is tRNA-specific 2-thiouridylase MnmA (358 aa).

ATP is bound by residues 6–13 and methionine 32; that span reads ALSGGVDS. Cysteine 103 (nucleophile) is an active-site residue. Cysteine 103 and cysteine 201 are oxidised to a cystine. An ATP-binding site is contributed by glycine 127. Residues 151–153 form an interaction with tRNA region; sequence KDQ. The Cysteine persulfide intermediate role is filled by cysteine 201.

It belongs to the MnmA/TRMU family.

Its subcellular location is the cytoplasm. It catalyses the reaction S-sulfanyl-L-cysteinyl-[protein] + uridine(34) in tRNA + AH2 + ATP = 2-thiouridine(34) in tRNA + L-cysteinyl-[protein] + A + AMP + diphosphate + H(+). Catalyzes the 2-thiolation of uridine at the wobble position (U34) of tRNA, leading to the formation of s(2)U34. This Thermotoga petrophila (strain ATCC BAA-488 / DSM 13995 / JCM 10881 / RKU-1) protein is tRNA-specific 2-thiouridylase MnmA.